A 235-amino-acid chain; its full sequence is Small capsomere-interacting protein (235 aa).

The interval 104–235 is disordered; it reads PRIIRPQPPN…SGNASRSRRV (132 aa). Residues 127–139 are compositionally biased toward polar residues; sequence PQKTQSADQSALQ. Low complexity predominate over residues 158–188; sequence TTSASVGQQQHVVSGSSGQQPQQGAQSSTVQ. The span at 220 to 235 shows a compositional bias: polar residues; sequence LSHTGQSGNASRSRRV.

Belongs to the herpesviridae small capsomere-interacting protein family. Interacts with the major capsid protein/MCP.

The protein localises to the virion. It is found in the host nucleus. Its function is as follows. Participates in the assembly of the infectious particles by decorating the outer surface of the capsid shell and thus forming a layer between the capsid and the tegument. Complexes composed of the capsid protein VP5 and VP26 assemble together in the host cytoplasm and are translocated to the nucleus, where they accumulate and participate in capsid assembly. Participates in the assembly of the infectious particles by decorating the outer surface of the capsid shell and thus forming a layer between the capsid and the tegument. Complexes composed of the major capsid protein and small capsomere-interacting protein/SCP assemble together in the host cytoplasm and are translocated to the nucleus, where they accumulate and participate in capsid assembly. This is Small capsomere-interacting protein from Homo sapiens (Human).